Here is a 481-residue protein sequence, read N- to C-terminus: Long chain base biosynthesis protein 1b (481 aa).

A helical membrane pass occupies residues 32-52; sequence FGIHIDGHLVVEGLLIAAILF.

It belongs to the class-II pyridoxal-phosphate-dependent aminotransferase family. In terms of assembly, heterodimer with LCB2. Component of the serine palmitoyltransferase (SPT) complex, composed of LCB1 and LCB2. Pyridoxal 5'-phosphate is required as a cofactor.

The protein localises to the endoplasmic reticulum membrane. The catalysed reaction is L-serine + hexadecanoyl-CoA + H(+) = 3-oxosphinganine + CO2 + CoA. It functions in the pathway lipid metabolism; sphingolipid metabolism. Functionally, serine palmitoyltransferase (SPT). The heterodimer formed with LCB2 constitutes the catalytic core. The chain is Long chain base biosynthesis protein 1b from Oryza sativa subsp. japonica (Rice).